Consider the following 574-residue polypeptide: Actin-binding protein wsp1 (574 aa).

Positions 19-130 (IPKSTNKIIA…KKVLDKGCHP (112 aa)) constitute a WH1 domain. 3 disordered regions span residues 144–186 (KGSS…ELLN), 221–494 (AGTP…IAEL), and 517–574 (KSRK…DEWD). Over residues 149-158 (HAPNNSNIQP) the composition is skewed to polar residues. Pro residues-rich tracts occupy residues 230-240 (PPIPPSIPSSR) and 251-260 (PAPPPIPPPS). Composition is skewed to low complexity over residues 297–306 (SRVSAAALAA) and 324–335 (KPPIGNGSSNSS). The span at 352–368 (PLPPQGRSAPPPPPPRS) shows a compositional bias: pro residues. Position 386 is a phosphoserine (Ser-386). Positions 415-485 (PPVPTPPSLP…PPPAPAPAPA (71 aa)) are enriched in pro residues. A WH2 domain is found at 499–518 (GRANLMASIRASGGMDLLKS). Residues 521–545 (VSASPSVASTKTSNPPVEAPPSNNL) show a composition bias toward polar residues. Acidic residues predominate over residues 563–574 (SDEEDEDDDEWD).

In terms of assembly, interacts with vrp1.

The protein localises to the cytoplasm. It is found in the cytoskeleton. Functionally, has a role in regulating actin assembly, so regulating polarized growth. The protein is Actin-binding protein wsp1 (wsp1) of Schizosaccharomyces pombe (strain 972 / ATCC 24843) (Fission yeast).